Consider the following 505-residue polypeptide: Actin nucleation-promoting factor WASL (505 aa).

S2 is modified (N-acetylserine). The 108-residue stretch at 34–141 (LGKKCVTMSS…KAVTDLLGRR (108 aa)) folds into the WH1 domain. 2 disordered regions span residues 138–163 (LGRRQRKSEKRRDPPNGPNLPMATVD) and 184–205 (HTKEKKKGKAKKKRLTKADIGT). Positions 186–198 (KEKKKGKAKKKRL) are enriched in basic residues. Positions 203-216 (IGTPSNFQHIGHVG) constitute a CRIB domain. At S242 the chain carries Phosphoserine; by TNK2. Position 256 is a phosphotyrosine; by FAK1 and TNK2 (Y256). Positions 266 to 406 (EAVKNELRRQ…HQVPTTAGNK (141 aa)) are disordered. Composition is skewed to pro residues over residues 276–364 (APPP…PPPS) and 371–391 (VAPPPPPPPPPPPGPPPPPGL). R307 is subject to Omega-N-methylarginine. WH2 domains are found at residues 405–422 (NKAALLDQIREGAQLKKV) and 433–450 (GRDALLDQIRQGIQLKSV). The tract at residues 476–505 (QKRSKAIHSSDEDEDEDDEEDFEDDDEWED) is disordered. S484 and S485 each carry phosphoserine. Residues 486–505 (DEDEDEDDEEDFEDDDEWED) are compositionally biased toward acidic residues.

As to quaternary structure, binds actin and the Arp2/3 complex. Interacts with CDC42. Interacts with FCHSD1. Interacts with FCHSD2. Binds to SH3 domains of GRB2. Interacts with the C-terminal SH3 domain of DNMBP. Interacts with SNX9. Interacts with the WW domains of PRPF40A/FBP11. Interacts with PTK2/FAK1. Interacts with PACSIN1, PACSIN2 and PACSIN3. Interacts with NOSTRIN. Binds to TNK2. Interacts with SNX33. Interacts with NONO (via second RRM domain); the interaction is direct. Component of a multiprotein complex with NONO and SFPQ; associates with the complex via direct interaction with NONO. In terms of assembly, (Microbial infection) Interacts with E.coli effector protein EspF(U). Identified in a complex containing at least WASL, BAIAP2L1 and E.coli EspF(U). (Microbial infection) Interacts with Shigella flexneri protein IcsA. The interaction with IcsA enhances the affinity of WASL for Arp2/3, thus assembling a tight complex which has maximal activity in actin assembly. Phosphorylation at Ser-242, Tyr-256, Ser-484 and Ser-485 enhances actin polymerization activity.

Its subcellular location is the cytoplasm. It localises to the cytoskeleton. The protein localises to the nucleus. Its function is as follows. Regulates actin polymerization by stimulating the actin-nucleating activity of the Arp2/3 complex. Involved in various processes, such as mitosis and cytokinesis, via its role in the regulation of actin polymerization. Together with CDC42, involved in the extension and maintenance of the formation of thin, actin-rich surface projections called filopodia. In addition to its role in the cytoplasm, also plays a role in the nucleus by regulating gene transcription, probably by promoting nuclear actin polymerization. Binds to HSF1/HSTF1 and forms a complex on heat shock promoter elements (HSE) that negatively regulates HSP90 expression. Plays a role in dendrite spine morphogenesis. Decreasing levels of DNMBP (using antisense RNA) alters apical junction morphology in cultured enterocytes, junctions curve instead of being nearly linear. This Homo sapiens (Human) protein is Actin nucleation-promoting factor WASL (WASL).